We begin with the raw amino-acid sequence, 116 residues long: Large ribosomal subunit protein bL17 (116 aa).

Belongs to the bacterial ribosomal protein bL17 family. Part of the 50S ribosomal subunit. Contacts protein L32.

This is Large ribosomal subunit protein bL17 from Rippkaea orientalis (strain PCC 8801 / RF-1) (Cyanothece sp. (strain PCC 8801)).